Consider the following 88-residue polypeptide: Sapecin-B (88 aa).

The signal sequence occupies residues 1 to 24 (MKFLTSLLLLFVVVMVSAVNLSMA). The propeptide occupies 25–54 (KESANQLTERLQELDGAAIQEPAELNRHKR). 3 disulfide bridges follow: Cys-57-Cys-78, Cys-64-Cys-84, and Cys-68-Cys-86.

Belongs to the invertebrate defensin family. Type 1 subfamily. In terms of tissue distribution, hemocytes and fat body.

It localises to the secreted. Sapecins, which are potent bactericidal proteins, are produced in response to injury. Sapecin B is cytotoxic to Gram-positive bacteria. This is Sapecin-B from Sarcophaga peregrina (Flesh fly).